The sequence spans 942 residues: MSSSSQAMLQKSDSIAEKMPDALKQSRYHMKRCFASFVGGGKKLMKREHLMNEIEKCIEDSRERSKILEGLFGYILTCTQEAAVVPPFVALAARPNPGFWEYVKVNSGDLTVDEITATDYLKLKESVFDESWSKDENALEIDFGAIDFTSPRLSLSSSIGKGADYISKFISSKLGGKSDKLEPLLNYLLRLNHHGENLMINDDLNTVAKLQKSLMLAVIVVSTYSKHTPYETFAQRLKEMGFEKGWGDTAERVKETMIILSEVLEAPDNGKLDLLFSRLPTVFNVVIFSVHGYFGQQDVLGLPDTGGQVVYILDQVRALEEELLIRINQQGLGFKPQILVVTRLIPEARGTKCDQELEAIEGTKHSHILRVPFVTNKGVLRQWVSRFDIYPYLERFTQDATSKILQRLDCKPDLIIGNYTDGNLVASLMATKLGVTQGTIAHALEKTKYEDSDAKWKELDPKYHFSCQFTADLIAMNVTDFIITSTYQEIAGSKDRPGQYESHTAFTMPGLCRVVSGIDVFDPKFNIAAPGADQSVYFPYTEKDKRFTKFHPSIQELLYNEKDNAEHMGYLADREKPIIFSMARLDTVKNITGLVEWYGKDKRLREMANLVVVAGFFDMSKSNDREEKAEIKKMHDLIEKYKLKGKFRWIAAQTDRYRNSELYRCIADTKGVFVQPALYEAFGLTVIEAMNCGLPTFATNQGGPAEIIVDGVSGFHIDPNNGDESVTKIGDFFSKCRSDGLYWDNISKGGLKRIYECYTWKIYAEKLLKMGSLYGFWRQVNEDQKKAKKRYIEMLYNLQFKQLTKKVTIPEDKPLPLRLASLRNLLPKKTTNLGAGSKQKEVTETEKTKQKSKDGQEQHDVKVGEREVREGLLAADASERVKKVLESSEEKQKLEKMKIAYGQQHSQGASPVRNLFWSVVVCLYICYILKQRFFGANSAQEY.

The segment at 281 to 759 (TVFNVVIFSV…GLKRIYECYT (479 aa)) is GT-B glycosyltransferase. The disordered stretch occupies residues 830-862 (TTNLGAGSKQKEVTETEKTKQKSKDGQEQHDVK). Over residues 838–862 (KQKEVTETEKTKQKSKDGQEQHDVK) the composition is skewed to basic and acidic residues.

It belongs to the glycosyltransferase 1 family. Plant sucrose synthase subfamily. As to expression, detected in the whole plant but more precisely confined to the vasculature in cotyledons, leaves, petals, anthers and roots.

It is found in the secreted. Its subcellular location is the cell wall. The enzyme catalyses an NDP-alpha-D-glucose + D-fructose = a ribonucleoside 5'-diphosphate + sucrose + H(+). Sucrose-cleaving enzyme that provides UDP-glucose and fructose for various metabolic pathways. Functions in callose synthesis at the site of phloem sieve elements. This Arabidopsis thaliana (Mouse-ear cress) protein is Sucrose synthase 6 (SUS6).